The primary structure comprises 771 residues: MEEDKLLSAVPEEGDATRDPGPEPEEEPGVRNGMASEGLNSSLCSPGHERRGTPADTEEPTKDPDVAFHGLSLGLSLTNGLALGPDLNILEDSAESRPWRAGVLAEGDNASRSLYPDAEDPQLGLDGPGEPDVRDGFSATFEKILESELLRGTQYSSLDSLDGLSLTDESDSCVSFEAPLTPLIQQRARDSPEPGAGLGIGDMAFEGDMGAAGGDGELGSPLRRSISSSRSENVLSRLSLMAMPNGFHEDGPQGPGGDEDDDEEDTDKLLNSASDPSLKDGLSDSDSELSSSEGLEPGSADPLANGCQGVSEAAHRLARRLYHLEGFQRCDVARQLGKNNEFSRLVAGEYLSFFDFSGLTLDGALRTFLKAFPLMGETQERERVLTHFSRRYCQCNPDDSTSEDGIHTLTCALMLLNTDLHGHNIGKKMSCQQFIANLDQLNDGQDFAKDLLKTLYNSIKNEKLEWAIDEDELRKSLSELVDDKFGTGTKKVTRILDGGNPFLDVPQALSATTYKHGVLTRKTHADMDGKRTPRGRRGWKKFYAVLKGTILYLQKDEYRPDKALSEGDLKNAIRVHHALATRASDYSKKSNVLKLKTADWRVFLFQAPSKEEMLSWILRINLVAAIFSAPAFPAAVSSMKKFCRPLLPSCTTRLCQEEQLRSHENKLRQLTAELAEHRCHPVERGIKSKEAEEYRLKEHYLTFEKSRYETYIHLLAMKIKVGSDDLERIEARLATLEGDDPSLRKTHSSPALSQGHVTGSKTTKDATGPDT.

2 disordered regions span residues 1–67 (MEED…PDVA) and 107–136 (GDNASRSLYPDAEDPQLGLDGPGEPDVRDG). The segment covering 47–66 (GHERRGTPADTEEPTKDPDV) has biased composition (basic and acidic residues). Ser191 is subject to Phosphoserine. Disordered stretches follow at residues 207 to 230 (GDMGAAGGDGELGSPLRRSISSSR) and 244 to 307 (PNGF…ANGC). Residues 218 to 230 (LGSPLRRSISSSR) show a composition bias toward low complexity. The segment covering 257-266 (GDEDDDEEDT) has biased composition (acidic residues). One can recognise an SEC7 domain in the interval 260-462 (DDDEEDTDKL…KTLYNSIKNE (203 aa)). Residues 288-299 (ELSSSEGLEPGS) are compositionally biased toward low complexity. In terms of domain architecture, PH spans 512–625 (TTYKHGVLTR…WILRINLVAA (114 aa)). The chain crosses the membrane as a helical span at residues 622–639 (LVAAIFSAPAFPAAVSSM). Residues 651 to 680 (TTRLCQEEQLRSHENKLRQLTAELAEHRCH) adopt a coiled-coil conformation. A disordered region spans residues 739–771 (DDPSLRKTHSSPALSQGHVTGSKTTKDATGPDT). Residues 748–761 (SSPALSQGHVTGSK) show a composition bias toward polar residues.

Belongs to the PSD family.

It localises to the cell membrane. The protein resides in the cell projection. The protein localises to the ruffle membrane. It is found in the cleavage furrow. This is PH and SEC7 domain-containing protein 2 (PSD2) from Homo sapiens (Human).